Consider the following 89-residue polypeptide: Small ribosomal subunit protein bS20 (89 aa).

The tract at residues 68 to 89 (PNKGARKSSRLDHFVNEQKSKQ) is disordered. Positions 76-89 (SRLDHFVNEQKSKQ) are enriched in basic and acidic residues.

It belongs to the bacterial ribosomal protein bS20 family.

In terms of biological role, binds directly to 16S ribosomal RNA. The polypeptide is Small ribosomal subunit protein bS20 (Mycoplasmopsis agalactiae (strain NCTC 10123 / CIP 59.7 / PG2) (Mycoplasma agalactiae)).